A 737-amino-acid chain; its full sequence is Relaxin receptor 2 (737 aa).

Residues 1 to 399 are Extracellular-facing; that stretch reads MFPLLHFIVL…SSFEDLLANN (399 aa). The LDL-receptor class A domain occupies 27-64; it reads LCQKGYFPCGNLTKCLPRAFHCDGVDDCGNGADEDNCG. 3 disulfide bridges follow: Cys-28–Cys-41, Cys-35–Cys-54, and Cys-48–Cys-63. N-linked (GlcNAc...) asparagine glycosylation occurs at Asn-37. Residue Asn-121 is glycosylated (N-linked (GlcNAc...) asparagine). LRR repeat units lie at residues 121 to 142, 145 to 166, 169 to 190, 193 to 214, 217 to 238, 241 to 262, 265 to 286, 289 to 310, 313 to 334, and 337 to 358; these read NTTLLSLKKNKIHSLPDKVFTK, QLKQIFLQHNCITHISRKAFFG, NLQILYLSHNCITTLRPGVFKD, QLTWLILDDNPITRISQQLFTG, SLFFLSMVNNYLEALPKQMCAQ, QLNWMDLEGNGIKYLTNSSFLS, SLTVLFLPRNQIDFVPEKTFSS, NLGELDLSSNMIMELPPEIFKD, LLQKLNLSSNPLLYLHKNQFES, and QLQSLDLERIEIPNINTRMFQP. An N-linked (GlcNAc...) asparagine glycan is attached at Asn-257. An N-linked (GlcNAc...) asparagine glycan is attached at Asn-318. Asn-361 carries an N-linked (GlcNAc...) asparagine glycan. Residues 400–420 traverse the membrane as a helical segment; the sequence is ILRIFVWVIAFITCFGNLFVI. At 421–438 the chain is on the cytoplasmic side; the sequence is GMRSFIKAENTTHATSIK. Residues 439–459 form a helical membrane-spanning segment; it reads ILCCADCLMGVYLFFIGFFDI. Residues 460–478 lie on the Extracellular side of the membrane; the sequence is KYRGQYQKYALLWMESLQC. A disulfide bond links Cys-478 and Cys-556. The chain crosses the membrane as a helical span at residues 479 to 501; that stretch reads RLMGFLAMLSTEVSVLLLTYLTL. Residues 502 to 520 are Cytoplasmic-facing; that stretch reads EKFLAIVFPFSNIRPGKWQ. The chain crosses the membrane as a helical span at residues 521 to 541; sequence TMVILICIWIVGFLIAVIPFW. The Extracellular portion of the chain corresponds to 542-575; that stretch reads KEDYFGNFYGKNGVCFPLYYDQTEDIGSKGYSLG. Residues 576–596 form a helical membrane-spanning segment; sequence IFLGVNLLAFLIIVFSYTIMF. The Cytoplasmic portion of the chain corresponds to 597 to 622; the sequence is CSIKKTALQTSEVRNPIGREVAVANR. A helical transmembrane segment spans residues 623-643; that stretch reads FFFIVFSDAICWIPVFVIKIL. Over 644–653 the chain is Extracellular; the sequence is SLFRVEIPGT. The helical transmembrane segment at 654–674 threads the bilayer; that stretch reads ITSWIVIFFLPVNSALNPILY. At 675–737 the chain is on the cytoplasmic side; that stretch reads TLTTSFFKDK…LGDSIVKPIS (63 aa).

The protein belongs to the G-protein coupled receptor 1 family.

It localises to the cell membrane. Its function is as follows. Receptor for relaxin. The activity of this receptor is mediated by G proteins leading to stimulation of adenylate cyclase and an increase of cAMP. May also be a receptor for Leydig insulin-like peptide (INSL3). The sequence is that of Relaxin receptor 2 (RXFP2) from Canis lupus familiaris (Dog).